A 104-amino-acid polypeptide reads, in one-letter code: Large ribosomal subunit protein uL24 (104 aa).

This sequence belongs to the universal ribosomal protein uL24 family. As to quaternary structure, part of the 50S ribosomal subunit.

One of two assembly initiator proteins, it binds directly to the 5'-end of the 23S rRNA, where it nucleates assembly of the 50S subunit. Its function is as follows. One of the proteins that surrounds the polypeptide exit tunnel on the outside of the subunit. In Pseudomonas fluorescens (strain Pf0-1), this protein is Large ribosomal subunit protein uL24.